We begin with the raw amino-acid sequence, 692 residues long: Elongation factor G (692 aa).

Residues 8–283 (EKVRNIGIAA…AVVDYLPAPT (276 aa)) enclose the tr-type G domain. Residues 17–24 (AHIDAGKT), 81–85 (DTPGH), and 135–138 (NKMD) contribute to the GTP site.

The protein belongs to the TRAFAC class translation factor GTPase superfamily. Classic translation factor GTPase family. EF-G/EF-2 subfamily.

The protein resides in the cytoplasm. Functionally, catalyzes the GTP-dependent ribosomal translocation step during translation elongation. During this step, the ribosome changes from the pre-translocational (PRE) to the post-translocational (POST) state as the newly formed A-site-bound peptidyl-tRNA and P-site-bound deacylated tRNA move to the P and E sites, respectively. Catalyzes the coordinated movement of the two tRNA molecules, the mRNA and conformational changes in the ribosome. This chain is Elongation factor G, found in Nitratiruptor sp. (strain SB155-2).